A 442-amino-acid polypeptide reads, in one-letter code: Transcription factor AP-2-epsilon (442 aa).

Positions 54-59 match the PPxY motif motif; the sequence is YFPPPY. S246 carries the phosphoserine; by PKA modification. The interval 287 to 417 is H-S-H (helix-span-helix), dimerization; sequence RRKAANVTLL…YLLESLKGLD (131 aa).

Belongs to the AP-2 family. In terms of assembly, binds DNA as a dimer. Can form homodimers or heterodimers with other AP-2 family members. In terms of tissue distribution, expressed in skin, primary keratinocytes, immortalized keratinocytes, and HeLa cell line.

It is found in the nucleus. Functionally, sequence-specific DNA-binding protein that interacts with inducible viral and cellular enhancer elements to regulate transcription of selected genes. AP-2 factors bind to the consensus sequence 5'-GCCNNNGGC-3' and activate genes involved in a large spectrum of important biological functions including proper eye, face, body wall, limb and neural tube development. They also suppress a number of genes including MCAM/MUC18, C/EBP alpha and MYC. AP-2-epsilon may play a role in the development of the CNS and in cartilage differentiation. The polypeptide is Transcription factor AP-2-epsilon (Homo sapiens (Human)).